A 278-amino-acid polypeptide reads, in one-letter code: MAALFLKRLTLQTVKSENSCIRCFGKHILQKTAPAQLSPIASAPRLSFLIHAKAFSTAEDTQNEGKKTKKNKTAFSNVGRKISQRVIHLFDEKGNDLGNMHRANVIRLMDERDLRLVQRNTSTEPAEYQLMTGLQILQERQRLREMEKANPKTGPTLRKELILSSNIGQHDLDTKTKQIQQWIKKKHLVQITIKKGKNVDVSENEMEEIFHQILQTMPGIATFSSRPQAVQGGKALMCVLRAFSKNEEKAYKETQETQERDTLNKDHGNDKESNVLHQ.

The N-terminal 31 residues, 1–31 (MAALFLKRLTLQTVKSENSCIRCFGKHILQK), are a transit peptide targeting the mitochondrion. A disordered region spans residues 249-278 (KAYKETQETQERDTLNKDHGNDKESNVLHQ).

Belongs to the IF-3 family.

It localises to the mitochondrion. In terms of biological role, IF-3 binds to the 28S ribosomal subunit and shifts the equilibrium between 55S ribosomes and their 39S and 28S subunits in favor of the free subunits, thus enhancing the availability of 28S subunits on which protein synthesis initiation begins. The protein is Translation initiation factor IF-3, mitochondrial (MTIF3) of Homo sapiens (Human).